The primary structure comprises 163 residues: MPSFDIVSEVDLQEARNAVDNASREVESRFDFRNVEASFELNDASKTIKVLSESDFQVNQLLDILRAKLLKRGIEGSSLDVPENIVHSGKTWFVEAKLKQGIESATQKKIVKMIKDSKLKVQAQIQGDEIRVTGKSRDDLQAVMAMVRGGDLGQPFQFKNFRD.

Belongs to the YajQ family.

Functionally, nucleotide-binding protein. The chain is Nucleotide-binding protein YajQ from Escherichia coli (strain K12 / DH10B).